A 135-amino-acid polypeptide reads, in one-letter code: Small ribosomal subunit protein bS6 (135 aa).

N6-acetyllysine is present on Lys93. The tract at residues 98 to 135 (EASPMVKAKDERRERRDDFANETADDAEAGDSEEEEEE) is disordered. Positions 104-116 (KAKDERRERRDDF) are enriched in basic and acidic residues. Acidic residues predominate over residues 120–135 (TADDAEAGDSEEEEEE).

This sequence belongs to the bacterial ribosomal protein bS6 family. Part of the 30S ribosomal subunit. Interacts weakly with uL2 in one of the 3.5 A resolved structures. Post-translationally, 5 different forms of the protein, varying only in the number of C-terminal glutamate residues, were isolated. The sequence shown is form bS6-6, which is the longest. The first two Glu are encoded by the rpsF gene, the other Glu are added post-translationally by the RimK enzyme.

In terms of biological role, binds together with bS18 to 16S ribosomal RNA. This Escherichia coli (strain K12) protein is Small ribosomal subunit protein bS6 (rpsF).